The sequence spans 196 residues: Zinc metalloproteinase-disintegrin-like bothrojarin-3 (196 aa).

One can recognise a Disintegrin domain in the interval 2 to 88 (PPVCGTELLE…DCPTDDIQRN (87 aa)). 5 residues coordinate Ca(2+): valine 4, leucine 9, glutamate 11, glutamate 14, and aspartate 17. Disulfide bonds link cysteine 5–cysteine 34, cysteine 16–cysteine 29, cysteine 18–cysteine 24, cysteine 28–cysteine 51, cysteine 42–cysteine 48, cysteine 47–cysteine 73, cysteine 60–cysteine 80, cysteine 67–cysteine 99, cysteine 92–cysteine 104, cysteine 111–cysteine 161, cysteine 126–cysteine 168, cysteine 139–cysteine 149, and cysteine 156–cysteine 193. Residues 66-68 (ECD) carry the D/ECD-tripeptide motif.

The protein belongs to the venom metalloproteinase (M12B) family. P-III subfamily. P-IIIa sub-subfamily. As to quaternary structure, monomer. The cofactor is Zn(2+). In terms of processing, glycosylated. In terms of tissue distribution, expressed by the venom gland.

It localises to the secreted. In terms of biological role, the hemorrhagic metalloproteinase-disintegrin-like bothrojarin-1 is a potent inhibitor of collagen-induced platelet aggregation by blockage of alpha-2/beta-1 (ITGA2/ITGB1) integrin. It does not present any fibrinogen-clotting activity. The chain is Zinc metalloproteinase-disintegrin-like bothrojarin-3 from Bothrops jararaca (Jararaca).